The following is a 179-amino-acid chain: Large ribosomal subunit protein uL5 (179 aa).

This sequence belongs to the universal ribosomal protein uL5 family. In terms of assembly, part of the 50S ribosomal subunit; part of the 5S rRNA/L5/L18/L25 subcomplex. Contacts the 5S rRNA and the P site tRNA. Forms a bridge to the 30S subunit in the 70S ribosome.

Functionally, this is one of the proteins that bind and probably mediate the attachment of the 5S RNA into the large ribosomal subunit, where it forms part of the central protuberance. In the 70S ribosome it contacts protein S13 of the 30S subunit (bridge B1b), connecting the 2 subunits; this bridge is implicated in subunit movement. Contacts the P site tRNA; the 5S rRNA and some of its associated proteins might help stabilize positioning of ribosome-bound tRNAs. This chain is Large ribosomal subunit protein uL5, found in Aromatoleum aromaticum (strain DSM 19018 / LMG 30748 / EbN1) (Azoarcus sp. (strain EbN1)).